A 1417-amino-acid chain; its full sequence is Cytoadherence-linked asexual protein 3.1 (1417 aa).

A signal peptide spans 1 to 24 (MVSFFKTPIFILIIFLYLNEKVIC). 4 cysteine pairs are disulfide-bonded: Cys-333–Cys-361, Cys-407–Cys-413, Cys-517–Cys-545, and Cys-521–Cys-542. Residues 1204–1224 (LVNGFMYAFCFFAISQMYAYF) form a helical membrane-spanning segment. The tract at residues 1383–1417 (TYIDTEKMNEADSADSDDEKDSDTPDDELMISRFH) is disordered. Residues 1394 to 1411 (DSADSDDEKDSDTPDDEL) are compositionally biased toward acidic residues.

As to quaternary structure, self-associates. Component of the RhopH complex. RhopH complex is at least composed of CLAG3.1/CLAG3.2, RhopH2 and RhopH3 with a 1:1:1 subunit stoichiometry. CLAG3.1/CLAG3.2 mediates subunit association through independent contacts with RhopH2 and RhopH3, which do not directly interact with one another. Interacts with RhopH2. Interacts with RhopH3.

The protein localises to the host cell membrane. Its subcellular location is the host cytoplasm. It localises to the cytoplasmic vesicle. The protein resides in the secretory vesicle. It is found in the rhoptry. In terms of biological role, participates in the formation of new permeability pathways in Plasmodium-infected erythrocytes enabling the uptake of nutrients from the blood plasma. The protein is Cytoadherence-linked asexual protein 3.1 of Plasmodium falciparum (isolate 3D7).